The following is a 344-amino-acid chain: Ferrochelatase (344 aa).

Positions 214 and 295 each coordinate Fe cation.

The protein belongs to the ferrochelatase family.

It is found in the cytoplasm. The catalysed reaction is heme b + 2 H(+) = protoporphyrin IX + Fe(2+). It participates in porphyrin-containing compound metabolism; protoheme biosynthesis; protoheme from protoporphyrin-IX: step 1/1. In terms of biological role, catalyzes the ferrous insertion into protoporphyrin IX. The protein is Ferrochelatase of Agrobacterium fabrum (strain C58 / ATCC 33970) (Agrobacterium tumefaciens (strain C58)).